A 743-amino-acid chain; its full sequence is MSNRVVDVNSKKTGTSWKKKLMKIVIWSLAMLSFIAGLVLLGLVAAATISGSKNLPTAEYKWAGCENLGKCQIDGFSTPPLVILSFDGFAKEYLERRIVKSLELIAECGVKADRVYPSFPSKTFPNHYTMVTGLYPESHGITDNYVFDPNLYPELLAMRKHEAKEFYQAEPIWSAYKRLTGNRVHCLFWVGCYYNITGYMPDVSPDYNQELPLKERIDTLIGWLKLPETERPALITAYLHEPDQAGHMQKNVNQELEEVNNYIDILMKALHDENLLECVNLVIVSDHGMQALNNSIEVETIVNMDGLVLSKGVVARIHLNETDRSIDEVAGEIRCKIDGVKVNTINDIPLRKHYSKSKRVGDIIIEGKPGTSFYKSETNLGDHGYDYHNENMHTVMFARGPSFLQNVTVPSFQNVQYMNLWLYLLGLEGTVDNNGTIGFFDSILKNPPIRENKWDSMEECLNFGSAEVLQCDKAEGHDLKKLSLHLENCKEHQNLPIYSKNNCFQSYCENSLIIHKNRQDVRKGVIESLTFSFSRNQSVFENSFSFVNTKYSIECPKLDTKDNFFTAGSEAISKLANAQYKFPSSFMKSELISSLLSLKDETIKFVDIWVPLSIKTDEYLKHYGKLFVLSGLAVDRNLDGIADDEESKEPTHFYRILITCTGNWLSTNPPLCKKYSDTKALAFVFPILNKKTTMDCMDSDAILLDYTSTIEDVENIASFQFQIGALSHQQNVYLRRNITTSLW.

Residues 1 to 23 (MSNRVVDVNSKKTGTSWKKKLMK) are Cytoplasmic-facing. Residues 24–44 (IVIWSLAMLSFIAGLVLLGLV) form a helical; Signal-anchor for type II membrane protein membrane-spanning segment. The Lumenal portion of the chain corresponds to 45–743 (AAATISGSKN…LRRNITTSLW (699 aa)). 2 residues coordinate Zn(2+): D87 and T123. The Nucleophile role is filled by T123. An N-linked (GlcNAc...) asparagine glycan is attached at N195. Residues D243, H247, D286, and H287 each coordinate Zn(2+). N-linked (GlcNAc...) asparagine glycosylation is found at N293 and N320. H383 is a binding site for Zn(2+). N-linked (GlcNAc...) asparagine glycans are attached at residues N406, N434, and N536. Ca(2+) contacts are provided by D635, N637, D639, I641, and D643. Residue N737 is glycosylated (N-linked (GlcNAc...) asparagine).

The protein belongs to the nucleotide pyrophosphatase/phosphodiesterase family. It depends on Zn(2+) as a cofactor. Requires Ca(2+) as cofactor.

The protein localises to the membrane. In terms of biological role, probable phosphodiesterase. The polypeptide is Ectonucleotide pyrophosphatase/phosphodiesterase C27A7.3 (Caenorhabditis elegans).